The following is a 138-amino-acid chain: Acidic phospholipase A2 VP7 (138 aa).

The N-terminal stretch at 1 to 16 is a signal peptide; the sequence is MRTLWIVAVCLMGVEG. Disulfide bonds link Cys-42-Cys-131, Cys-44-Cys-60, Cys-59-Cys-111, Cys-65-Cys-138, Cys-66-Cys-104, Cys-73-Cys-97, and Cys-91-Cys-102. Ca(2+)-binding residues include Tyr-43, Gly-45, and Gly-47. Residue His-63 is part of the active site. Residue Asp-64 coordinates Ca(2+). Residue Asp-105 is part of the active site.

This sequence belongs to the phospholipase A2 family. Group II subfamily. D49 sub-subfamily. In terms of assembly, does not form a complex. Ca(2+) is required as a cofactor. In terms of tissue distribution, expressed by the venom gland.

The protein localises to the secreted. It catalyses the reaction a 1,2-diacyl-sn-glycero-3-phosphocholine + H2O = a 1-acyl-sn-glycero-3-phosphocholine + a fatty acid + H(+). Its function is as follows. Snake venom phospholipase A2 (PLA2) that is not toxic by itself, but the synergistical mixture of a basic and this acidic protein is lethal. PLA2 catalyzes the calcium-dependent hydrolysis of the 2-acyl groups in 3-sn-phosphoglycerides. The polypeptide is Acidic phospholipase A2 VP7 (Daboia palaestinae (Palestine viper)).